The sequence spans 310 residues: Vomeronasal type-1 receptor 47 (310 aa).

Topologically, residues M1 to T16 are extracellular. Residues F17–I37 form a helical membrane-spanning segment. The Cytoplasmic portion of the chain corresponds to K38–D49. A helical transmembrane segment spans residues L50–A70. Topologically, residues T71–L91 are extracellular. A disulfide bridge connects residues C85 and C172. The helical transmembrane segment at Y92–L114 threads the bilayer. The Cytoplasmic segment spans residues S115–N131. The chain crosses the membrane as a helical span at residues I132 to I152. At S153 to E193 the chain is on the extracellular side. N-linked (GlcNAc...) asparagine glycosylation is present at N159. The chain crosses the membrane as a helical span at residues V194 to H214. Residues R215–Q238 are Cytoplasmic-facing. The chain crosses the membrane as a helical span at residues T239–S259. Over S260–T269 the chain is Extracellular. The helical transmembrane segment at C270–M290 threads the bilayer. The Cytoplasmic portion of the chain corresponds to S291 to M310.

It belongs to the G-protein coupled receptor 1 family.

It localises to the cell membrane. Its function is as follows. Putative pheromone receptor implicated in the regulation of social and reproductive behavior. The sequence is that of Vomeronasal type-1 receptor 47 (Vmn1r47) from Mus musculus (Mouse).